The sequence spans 145 residues: Regulator of sigma D (145 aa).

This sequence belongs to the Rsd/AlgQ family. Interacts with RpoD.

The protein resides in the cytoplasm. Its function is as follows. Binds RpoD and negatively regulates RpoD-mediated transcription activation by preventing the interaction between the primary sigma factor RpoD with the catalytic core of the RNA polymerase and with promoter DNA. May be involved in replacement of the RNA polymerase sigma subunit from RpoD to RpoS during the transition from exponential growth to the stationary phase. The chain is Regulator of sigma D from Sodalis glossinidius (strain morsitans).